Consider the following 781-residue polypeptide: Pyrin (781 aa).

One can recognise a Pyrin domain in the interval 1 to 92 (MAKTPSDHLL…AEELHRAAIQ (92 aa)). Residues 93–111 (EYSTQENGTDDSAASSSLG) are compositionally biased toward polar residues. The segment at 93-226 (EYSTQENGTD…AGGAPGQKEC (134 aa)) is disordered. Basic and acidic residues predominate over residues 113 to 126 (NKPRSLKTPDHPEG). A compositionally biased stretch (basic residues) spans 153–163 (LSRKPLSKRRE). Ser242 bears the Phosphoserine mark. Residues 266 to 280 (KTAANLDSATEPRAR) form an interaction with RELA region. Disordered stretches follow at residues 270–322 (NLDS…EGDP) and 336–373 (EAVSGHPQASGSRSPGCPRCQDSHERKSPGSLSPQPLP). Residues 370–412 (QPLPQCKRHLKQVQLLFCEDHDEPICLICSLSQEHQGHRVRPI) form a B box-type zinc finger. Residues 413 to 442 (EEVALEHKKKIQKQLEHLKKLRKSGEEQRS) adopt a coiled-coil conformation. The short motif at 420–437 (KKKIQKQLEHLKKLRKSG) is the Nuclear localization signal element. The tract at residues 420 to 582 (KKKIQKQLEH…YFSETLRSEM (163 aa)) is required for homotrimerization and induction of pyroptosomes. In terms of domain architecture, B30.2/SPRY spans 580–775 (SEMEMFNVPE…NTAPLTICPV (196 aa)).

Homotrimer. Interacts (via the B box-type zinc finger) with PSTPIP1. Interacts (via the B30.2/SPRY domain) with several components of the inflammasome complex, including CASP1 p20 and p10 subunits, CASP5, PYCARD, NLRP1, NLRP2 and NLRP3, as well as with unprocessed IL1B; this interaction may lead to autophagic degradation of these proteins. Component of the AIM2 PANoptosome complex, a multiprotein complex that drives inflammatory cell death (PANoptosis). Interacts with NFKBIA and RELA. Interacts weakly with VASP and ACTR3. Interacts with active ULK1 (phosphorylated on 'Ser-317') and BECN1 simultaneously. Also interacts with ATG16L1 (via WD repeats), and with ATG8 family members, including GABARAP, GABARAPL1 and, to a lesser extent, GABARAPL2, MAP1LC3A/LC3A and MAP1LC3C/LC3C. Interacts with TRIM21. Interacts with YWHAB, YWHAE, YWHAG, YWHAH, YWHAQ and YWHAZ; the interaction is required for the down-regulation of pyrin pro-inflammatory activity. Cleaved by CASP1. The N-terminal cleavage product localizes to the nucleus as a filamentous network and to the cytoplasm, interacts more strongly with RELA and NFKBIA than the full-length protein, enhances the nuclear localization of RELA and induces NFKBIA proteolysis. The C-terminal cleavage product localizes to the cytoplasm. In terms of processing, phosphorylation at Ser-242 is required for the interaction with 14-3-3 proteins and down-regulation of pyrin pro-inflammatory activity. Post-translationally, degraded along with the delivery of its substrates to autolysosomal compartments (at protein level). As to expression, expressed in peripheral blood leukocytes, particularly in mature granulocytes and to a lesser extent in monocytes but not in lymphocytes. Detected in spleen, lung and muscle, probably as a result of leukocyte infiltration in these tissues. Not expressed in thymus, prostate, testis, ovary, small intestine, colon, heart, brain, placenta, liver, kidney, pancreas. Expression detected in several myeloid leukemic, colon cancer, and prostate cancer cell lines.

It localises to the cytoplasm. Its subcellular location is the cytoskeleton. It is found in the cell projection. The protein localises to the ruffle. The protein resides in the lamellipodium. It localises to the nucleus. Its subcellular location is the cytoplasmic vesicle. It is found in the autophagosome. Involved in the regulation of innate immunity and the inflammatory response in response to IFNG/IFN-gamma. Organizes autophagic machinery by serving as a platform for the assembly of ULK1, Beclin 1/BECN1, ATG16L1, and ATG8 family members and recognizes specific autophagy targets, thus coordinating target recognition with assembly of the autophagic apparatus and initiation of autophagy. Acts as an autophagy receptor for the degradation of several inflammasome components, including CASP1, NLRP1 and NLRP3, hence preventing excessive IL1B- and IL18-mediated inflammation. However, it can also have a positive effect in the inflammatory pathway, acting as an innate immune sensor that triggers PYCARD/ASC specks formation, caspase-1 activation, and IL1B and IL18 production. Together with AIM2, also acts as a mediator of pyroptosis, necroptosis and apoptosis (PANoptosis), an integral part of host defense against pathogens, in response to bacterial infection. It is required for PSTPIP1-induced PYCARD/ASC oligomerization and inflammasome formation. Recruits PSTPIP1 to inflammasomes, and is required for PSTPIP1 oligomerization. The protein is Pyrin of Homo sapiens (Human).